The sequence spans 188 residues: UPF0301 protein Cag_1601 (188 aa).

Belongs to the UPF0301 (AlgH) family.

This Chlorobium chlorochromatii (strain CaD3) protein is UPF0301 protein Cag_1601.